The following is a 316-amino-acid chain: Beta-ketoacyl-[acyl-carrier-protein] synthase III 1 (316 aa).

Residues cysteine 112 and histidine 243 contribute to the active site. Residues 244–248 form an ACP-binding region; it reads QANYR. Residue asparagine 273 is part of the active site.

It belongs to the thiolase-like superfamily. FabH family. As to quaternary structure, homodimer.

It localises to the cytoplasm. The enzyme catalyses malonyl-[ACP] + acetyl-CoA + H(+) = 3-oxobutanoyl-[ACP] + CO2 + CoA. It functions in the pathway lipid metabolism; fatty acid biosynthesis. Catalyzes the condensation reaction of fatty acid synthesis by the addition to an acyl acceptor of two carbons from malonyl-ACP. Catalyzes the first condensation reaction which initiates fatty acid synthesis and may therefore play a role in governing the total rate of fatty acid production. Possesses both acetoacetyl-ACP synthase and acetyl transacylase activities. Its substrate specificity determines the biosynthesis of branched-chain and/or straight-chain of fatty acids. The protein is Beta-ketoacyl-[acyl-carrier-protein] synthase III 1 of Vibrio parahaemolyticus serotype O3:K6 (strain RIMD 2210633).